Consider the following 101-residue polypeptide: Protein Tat (101 aa).

Over residues 1 to 12 the composition is skewed to basic and acidic residues; it reads MDPVDPRLEPWK. Residues 1-20 form a disordered region; that stretch reads MDPVDPRLEPWKHPGSQPKA. The interval 1 to 24 is interaction with human CREBBP; the sequence is MDPVDPRLEPWKHPGSQPKAACTS. A transactivation region spans residues 1–48; it reads MDPVDPRLEPWKHPGSQPKAACTSCYCKKCCFHCQVCFTTKGLGISYG. The Zn(2+) site is built by cysteine 22, cysteine 25, and cysteine 27. The tract at residues 22–37 is cysteine-rich; that stretch reads CTSCYCKKCCFHCQVC. Lysine 28 carries the N6-acetyllysine; by host PCAF modification. Zn(2+)-binding residues include cysteine 30, histidine 33, cysteine 34, and cysteine 37. The interval 38–48 is core; sequence FTTKGLGISYG. The segment covering 48–57 has biased composition (basic residues); it reads GRKKRRQRRR. Residues 48-101 form a disordered region; the sequence is GRKKRRQRRRAPQDSQTHQVSLPKQPASQARGDPTGPKESKKKVERETETDPVD. The Nuclear localization signal, RNA-binding (TAR), and protein transduction signature appears at 49–57; that stretch reads RKKRRQRRR. Positions 49–86 are interaction with the host capping enzyme RNGTT; it reads RKKRRQRRRAPQDSQTHQVSLPKQPASQARGDPTGPKE. Lysine 50 and lysine 51 each carry N6-acetyllysine; by host EP300 and GCN5L2. Asymmetric dimethylarginine; by host PRMT6 occurs at positions 52 and 53. Over residues 60–75 the composition is skewed to polar residues; the sequence is QDSQTHQVSLPKQPAS. Residue lysine 71 forms a Glycyl lysine isopeptide (Lys-Gly) (interchain with G-Cter in ubiquitin) linkage. A Cell attachment site motif is present at residues 78 to 80; that stretch reads RGD. The segment covering 83-101 has biased composition (basic and acidic residues); that stretch reads GPKESKKKVERETETDPVD.

Belongs to the lentiviruses Tat family. As to quaternary structure, interacts with host CCNT1. Associates with the P-TEFb complex composed at least of Tat, P-TEFb (CDK9 and CCNT1), TAR RNA, RNA Pol II. Recruits the HATs CREBBP, TAF1/TFIID, EP300, PCAF and GCN5L2. Interacts with host KAT5/Tip60; this interaction targets the latter to degradation. Interacts with the host deacetylase SIRT1. Interacts with host capping enzyme RNGTT; this interaction stimulates RNGTT. Binds to host KDR, and to the host integrins ITGAV/ITGB3 and ITGA5/ITGB1. Interacts with host KPNB1/importin beta-1 without previous binding to KPNA1/importin alpha-1. Interacts with EIF2AK2. Interacts with host nucleosome assembly protein NAP1L1; this interaction may be required for the transport of Tat within the nucleus, since the two proteins interact at the nuclear rim. Interacts with host C1QBP/SF2P32; this interaction involves lysine-acetylated Tat. Interacts with the host chemokine receptors CCR2, CCR3 and CXCR4. Interacts with host DPP4/CD26; this interaction may trigger an anti-proliferative effect. Interacts with host LDLR. Interacts with the host extracellular matrix metalloproteinase MMP1. Interacts with host PRMT6; this interaction mediates Tat's methylation. Interacts with, and is ubiquitinated by MDM2/Hdm2. Interacts with host PSMC3 and HTATIP2. Interacts with STAB1; this interaction may overcome SATB1-mediated repression of IL2 and IL2RA (interleukin) in T cells by binding to the same domain than HDAC1. Interacts (when acetylated) with human CDK13, thereby increasing HIV-1 mRNA splicing and promoting the production of the doubly spliced HIV-1 protein Nef. Interacts with host TBP; this interaction modulates the activity of transcriptional pre-initiation complex. Interacts with host RELA. Interacts with host PLSCR1; this interaction negatively regulates Tat transactivation activity by altering its subcellular distribution. In terms of processing, asymmetrical arginine methylation by host PRMT6 seems to diminish the transactivation capacity of Tat and affects the interaction with host CCNT1. Acetylation by EP300, CREBBP, GCN5L2/GCN5 and PCAF regulates the transactivation activity of Tat. EP300-mediated acetylation of Lys-50 promotes dissociation of Tat from the TAR RNA through the competitive binding to PCAF's bromodomain. In addition, the non-acetylated Tat's N-terminus can also interact with PCAF. PCAF-mediated acetylation of Lys-28 enhances Tat's binding to CCNT1. Lys-50 is deacetylated by SIRT1. Post-translationally, polyubiquitination by host MDM2 does not target Tat to degradation, but activates its transactivation function and fosters interaction with CCNT1 and TAR RNA. In terms of processing, phosphorylated by EIF2AK2 on serine and threonine residues adjacent to the basic region important for TAR RNA binding and function. Phosphorylation of Tat by EIF2AK2 is dependent on the prior activation of EIF2AK2 by dsRNA.

The protein resides in the host nucleus. It is found in the host nucleolus. It localises to the host cytoplasm. Its subcellular location is the secreted. Transcriptional activator that increases RNA Pol II processivity, thereby increasing the level of full-length viral transcripts. Recognizes a hairpin structure at the 5'-LTR of the nascent viral mRNAs referred to as the transactivation responsive RNA element (TAR) and recruits the cyclin T1-CDK9 complex (P-TEFb complex) that will in turn hyperphosphorylate the RNA polymerase II to allow efficient elongation. The CDK9 component of P-TEFb and other Tat-activated kinases hyperphosphorylate the C-terminus of RNA Pol II that becomes stabilized and much more processive. Other factors such as HTATSF1/Tat-SF1, SUPT5H/SPT5, and HTATIP2 are also important for Tat's function. Besides its effect on RNA Pol II processivity, Tat induces chromatin remodeling of proviral genes by recruiting the histone acetyltransferases (HATs) CREBBP, EP300 and PCAF to the chromatin. This also contributes to the increase in proviral transcription rate, especially when the provirus integrates in transcriptionally silent region of the host genome. To ensure maximal activation of the LTR, Tat mediates nuclear translocation of NF-kappa-B by interacting with host RELA. Through its interaction with host TBP, Tat may also modulate transcription initiation. Tat can reactivate a latently infected cell by penetrating in it and transactivating its LTR promoter. In the cytoplasm, Tat is thought to act as a translational activator of HIV-1 mRNAs. Functionally, extracellular circulating Tat can be endocytosed by surrounding uninfected cells via the binding to several surface receptors such as CD26, CXCR4, heparan sulfate proteoglycans (HSPG) or LDLR. Neurons are rarely infected, but they internalize Tat via their LDLR. Through its interaction with nuclear HATs, Tat is potentially able to control the acetylation-dependent cellular gene expression. Modulates the expression of many cellular genes involved in cell survival, proliferation or in coding for cytokines or cytokine receptors. Tat plays a role in T-cell and neurons apoptosis. Tat induced neurotoxicity and apoptosis probably contribute to neuroAIDS. Circulating Tat also acts as a chemokine-like and/or growth factor-like molecule that binds to specific receptors on the surface of the cells, affecting many cellular pathways. In the vascular system, Tat binds to ITGAV/ITGB3 and ITGA5/ITGB1 integrins dimers at the surface of endothelial cells and competes with bFGF for heparin-binding sites, leading to an excess of soluble bFGF. The protein is Protein Tat of Homo sapiens (Human).